Consider the following 295-residue polypeptide: Pyridoxal 5'-phosphate synthase subunit PdxS (295 aa).

Asp25 serves as a coordination point for D-ribose 5-phosphate. The active-site Schiff-base intermediate with D-ribose 5-phosphate is Lys82. Gly154 serves as a coordination point for D-ribose 5-phosphate. Arg166 lines the D-glyceraldehyde 3-phosphate pocket. D-ribose 5-phosphate-binding positions include Gly215 and Gly236 to Ser237.

Belongs to the PdxS/SNZ family. As to quaternary structure, in the presence of PdxT, forms a dodecamer of heterodimers.

It catalyses the reaction aldehydo-D-ribose 5-phosphate + D-glyceraldehyde 3-phosphate + L-glutamine = pyridoxal 5'-phosphate + L-glutamate + phosphate + 3 H2O + H(+). It functions in the pathway cofactor biosynthesis; pyridoxal 5'-phosphate biosynthesis. In terms of biological role, catalyzes the formation of pyridoxal 5'-phosphate from ribose 5-phosphate (RBP), glyceraldehyde 3-phosphate (G3P) and ammonia. The ammonia is provided by the PdxT subunit. Can also use ribulose 5-phosphate and dihydroxyacetone phosphate as substrates, resulting from enzyme-catalyzed isomerization of RBP and G3P, respectively. This chain is Pyridoxal 5'-phosphate synthase subunit PdxS, found in Listeria welshimeri serovar 6b (strain ATCC 35897 / DSM 20650 / CCUG 15529 / CIP 8149 / NCTC 11857 / SLCC 5334 / V8).